The following is a 156-amino-acid chain: ATP synthase subunit b (156 aa).

The chain crosses the membrane as a helical span at residues 7–29; sequence LIGQMGTFLVFWWFVNKVIWPMF.

Belongs to the ATPase B chain family. F-type ATPases have 2 components, F(1) - the catalytic core - and F(0) - the membrane proton channel. F(1) has five subunits: alpha(3), beta(3), gamma(1), delta(1), epsilon(1). F(0) has three main subunits: a(1), b(2) and c(10-14). The alpha and beta chains form an alternating ring which encloses part of the gamma chain. F(1) is attached to F(0) by a central stalk formed by the gamma and epsilon chains, while a peripheral stalk is formed by the delta and b chains.

It localises to the cell inner membrane. In terms of biological role, f(1)F(0) ATP synthase produces ATP from ADP in the presence of a proton or sodium gradient. F-type ATPases consist of two structural domains, F(1) containing the extramembraneous catalytic core and F(0) containing the membrane proton channel, linked together by a central stalk and a peripheral stalk. During catalysis, ATP synthesis in the catalytic domain of F(1) is coupled via a rotary mechanism of the central stalk subunits to proton translocation. Functionally, component of the F(0) channel, it forms part of the peripheral stalk, linking F(1) to F(0). The polypeptide is ATP synthase subunit b (Dichelobacter nodosus (strain VCS1703A)).